Here is a 579-residue protein sequence, read N- to C-terminus: Carboxysome shell carbonic anhydrase (579 aa).

Residues 72-95 (GGGRVRSARDQRQPGWVRRDKGAT) are disordered. Residues 78 to 93 (SARDQRQPGWVRRDKG) show a composition bias toward basic and acidic residues. Residue Cys240 coordinates Zn(2+). Asp242 serves as the catalytic Proton acceptor. Residues His308 and Cys319 each contribute to the Zn(2+) site.

The protein belongs to the beta-class carbonic anhydrase family. CsoSCA subfamily. Homodimer. Zn(2+) is required as a cofactor.

It localises to the carboxysome. The enzyme catalyses hydrogencarbonate + H(+) = CO2 + H2O. Its activity is regulated as follows. Inhibited by dithiothreitol, partially inhibited by acetatzolamide and cyanide. Reversible hydration of carbon dioxide. Essential for photosynthetic carbon dioxide fixation, supplies CO(2) to RuBisCO (ribulose bisphosphate carboxylase, cbbL-cbbS) in the carboxysome. In Parasynechococcus marenigrum (strain WH8102), this protein is Carboxysome shell carbonic anhydrase.